A 110-amino-acid chain; its full sequence is Ubiquitin-related modifier 1 (110 aa).

Gly-110 bears the 1-thioglycine mark. Residue Gly-110 forms a Glycyl lysine isopeptide (Gly-Lys) (interchain with K-? in acceptor proteins) linkage.

The protein belongs to the URM1 family. As to quaternary structure, homodimer; homodimerization may provide an autoprotection to the highly active C-terminal residue before attacking its substrates. Forms a conjugate with the target protein AHP1. In terms of processing, C-terminal thiocarboxylation occurs in 2 steps, it is first acyl-adenylated (-COAMP) via the hesA/moeB/thiF part of UBA4, then thiocarboxylated (-COSH) via the rhodanese domain of UBA4.

It is found in the cytoplasm. It participates in tRNA modification; 5-methoxycarbonylmethyl-2-thiouridine-tRNA biosynthesis. Acts as a sulfur carrier required for 2-thiolation of mcm(5)S(2)U at tRNA wobble positions of cytosolic tRNA(Lys), tRNA(Glu) and tRNA(Gln). Serves as sulfur donor in tRNA 2-thiolation reaction by being thiocarboxylated (-COSH) at its C-terminus by the MOCS3 homolog UBA4. The sulfur is then transferred to tRNA to form 2-thiolation of mcm(5)S(2)U. Prior mcm(5) tRNA modification by the elongator complex is required for 2-thiolation. Also acts as a ubiquitin-like protein (UBL) that is covalently conjugated via an isopeptide bond to lysine residues of target proteins such as AHP1. Conjugation does not depend on the canonical cascade of E2 ubiquitin-conjugating enzymes and/or E3 ligases. The conjugation reaction requires a thiocarboxylated C-terminus of URM1 and a peroxidatic cysteine in the target protein, as the sulfur atom of the URM1 thiocarboxyl group is transferred to redox-active cysteine residues in the target protein. Oxidative stress specifically induces the formation of UBL-protein conjugates. Covalent modification with URM1 promotes the phase separation of a wide range of proteins into condensates like stress granules. This chain is Ubiquitin-related modifier 1, found in Chaetomium thermophilum (strain DSM 1495 / CBS 144.50 / IMI 039719) (Thermochaetoides thermophila).